The following is a 443-amino-acid chain: UDP-N-acetylmuramate--L-alanine ligase (443 aa).

An ATP-binding site is contributed by 111-117; it reads GAHGKTS.

This sequence belongs to the MurCDEF family.

It is found in the cytoplasm. It catalyses the reaction UDP-N-acetyl-alpha-D-muramate + L-alanine + ATP = UDP-N-acetyl-alpha-D-muramoyl-L-alanine + ADP + phosphate + H(+). It participates in cell wall biogenesis; peptidoglycan biosynthesis. Functionally, cell wall formation. The chain is UDP-N-acetylmuramate--L-alanine ligase from Ligilactobacillus salivarius (strain UCC118) (Lactobacillus salivarius).